A 392-amino-acid chain; its full sequence is Solute carrier family 35 member B1 (392 aa).

The segment at 1-40 (MSLTKKIKNEKSLKQEKQTDQLKSNLRNNNNNINNKSKPK) is disordered. Residues 7–20 (IKNEKSLKQEKQTD) show a composition bias toward basic and acidic residues. Residues 25-35 (NLRNNNNNINN) show a composition bias toward low complexity. 9 helical membrane passes run 57–77 (ELFF…YGLV), 97–117 (AFLL…VSLV), 124–144 (NTPF…TFLS), 155–175 (TQVL…LLLF), 179–199 (YPFL…LFML), 215–235 (HLFG…MGPF), 247–267 (ATSM…IMAF), 285–305 (VIKL…FIFL), and 341–361 (LQWA…YISY). The Di-lysine motif motif lies at 389 to 392 (KKSL).

This sequence belongs to the nucleotide-sugar transporter family. SLC35B subfamily.

The protein resides in the endoplasmic reticulum membrane. Functionally, probable sugar transporter. This Dictyostelium discoideum (Social amoeba) protein is Solute carrier family 35 member B1 (slc35b1).